A 441-amino-acid polypeptide reads, in one-letter code: Peroxisomal multifunctional enzyme A (441 aa).

Residues 1–302 (MALNFKDKVV…VNSKPADGES (302 aa)) form a 3-hydroxyacyl-CoA dehydrogenase region. NAD(+) is bound by residues 11–35 (IVTG…AKVV), I19, D38, 73–74 (SV), and N97. Position 149 (S149) interacts with substrate. Residue Y162 is the Proton acceptor of the active site. Residues 162 to 166 (YGSMK) and 194 to 197 (AASR) each bind NAD(+). In terms of domain architecture, SCP2 spans 331 to 440 (ASKIFTTIQG…KLGALMQGSK (110 aa)). Q412 contacts substrate.

Belongs to the short-chain dehydrogenases/reductases (SDR) family.

It is found in the peroxisome. The enzyme catalyses a (3S)-3-hydroxyacyl-CoA + NAD(+) = a 3-oxoacyl-CoA + NADH + H(+). Its pathway is lipid metabolism; fatty acid beta-oxidation. In terms of biological role, enzyme acting on the peroxisomal beta-oxidation pathway for fatty acids. Protects the cells from the increase of the harmful xenobiotic fatty acids incorporated from their diets and optimizes cellular lipid composition for proper development. This is Peroxisomal multifunctional enzyme A (mfeA) from Dictyostelium discoideum (Social amoeba).